The primary structure comprises 124 residues: uncharacterized protein (124 aa).

The first 22 residues, 1–22 (MGTSSVLLMIASSLILLEVVMT), serve as a signal peptide directing secretion.

This is an uncharacterized protein from Caenorhabditis elegans.